The chain runs to 98 residues: Large ribosomal subunit protein eL14 (98 aa).

It belongs to the eukaryotic ribosomal protein eL14 family.

The chain is Large ribosomal subunit protein eL14 from Hyperthermus butylicus (strain DSM 5456 / JCM 9403 / PLM1-5).